The sequence spans 264 residues: Thymidylate synthase (264 aa).

Residue Arg21 participates in dUMP binding. A (6R)-5,10-methylene-5,6,7,8-tetrahydrofolate-binding site is contributed by His51. 126-127 (RR) provides a ligand contact to dUMP. Cys146 acts as the Nucleophile in catalysis. DUMP contacts are provided by residues 166–169 (RSAD), Asn177, and 207–209 (HLY). Residue Asp169 coordinates (6R)-5,10-methylene-5,6,7,8-tetrahydrofolate. Ala263 is a binding site for (6R)-5,10-methylene-5,6,7,8-tetrahydrofolate.

The protein belongs to the thymidylate synthase family. Bacterial-type ThyA subfamily. As to quaternary structure, homodimer.

It is found in the cytoplasm. It catalyses the reaction dUMP + (6R)-5,10-methylene-5,6,7,8-tetrahydrofolate = 7,8-dihydrofolate + dTMP. The protein operates within pyrimidine metabolism; dTTP biosynthesis. In terms of biological role, catalyzes the reductive methylation of 2'-deoxyuridine-5'-monophosphate (dUMP) to 2'-deoxythymidine-5'-monophosphate (dTMP) while utilizing 5,10-methylenetetrahydrofolate (mTHF) as the methyl donor and reductant in the reaction, yielding dihydrofolate (DHF) as a by-product. This enzymatic reaction provides an intracellular de novo source of dTMP, an essential precursor for DNA biosynthesis. This is Thymidylate synthase from Legionella pneumophila (strain Paris).